The primary structure comprises 164 residues: MARGINKVILVGNLGNDPDIKYTQGGMTITTISLATTSVRKDKEGNTQERTEWHRVKFFGKLGEIAGEYLRKGSQCYIEGSIRYDKFTGQDGQERYVTEIVADEMQMLGGRSDGGGMGGGGERPQRQTSQRQDYAPRRQARQPSQSPQSSPPPMDDFADDDIPF.

Residues 5–109 (INKVILVGNL…IVADEMQMLG (105 aa)) form the SSB domain. Residues 105-164 (MQMLGGRSDGGGMGGGGERPQRQTSQRQDYAPRRQARQPSQSPQSSPPPMDDFADDDIPF) form a disordered region. Positions 111–122 (RSDGGGMGGGGE) are enriched in gly residues. The Important for interaction with partner proteins signature appears at 159–164 (DDDIPF).

In terms of assembly, homotetramer.

Functionally, plays an important role in DNA replication, recombination and repair. Binds to ssDNA and to an array of partner proteins to recruit them to their sites of action during DNA metabolism. In Xylella fastidiosa (strain 9a5c), this protein is Single-stranded DNA-binding protein 2 (ssb2).